The following is a 704-amino-acid chain: Ion-translocating oxidoreductase complex subunit C (704 aa).

4Fe-4S ferredoxin-type domains lie at 368–397 and 407–436; these read MGAP…QQLY and KATA…VQYF. Residues C377, C380, C383, C387, C416, C419, C422, and C426 each coordinate [4Fe-4S] cluster. A disordered region spans residues 535-684; the sequence is ARAKQAAHPM…PADPRKAAVA (150 aa). Residues 556-565 are compositionally biased toward low complexity; that stretch reads KAAVEAAIAR.

This sequence belongs to the 4Fe4S bacterial-type ferredoxin family. RnfC subfamily. The complex is composed of six subunits: RsxA, RsxB, RsxC, RsxD, RsxE and RsxG. The cofactor is [4Fe-4S] cluster.

It localises to the cell inner membrane. In terms of biological role, part of a membrane-bound complex that couples electron transfer with translocation of ions across the membrane. Required to maintain the reduced state of SoxR. The sequence is that of Ion-translocating oxidoreductase complex subunit C from Salmonella paratyphi C (strain RKS4594).